Here is a 566-residue protein sequence, read N- to C-terminus: Oxygen-dependent choline dehydrogenase (566 aa).

Position 7–36 (7–36 (DYIICGAGSAGNVLATRLTEDPDVTVLLLE)) interacts with FAD. Residues 180-202 (NGYQQEGFGPMDRTVTPKGRRAS) form a disordered region. His474 (proton acceptor) is an active-site residue.

Belongs to the GMC oxidoreductase family. FAD is required as a cofactor.

The enzyme catalyses choline + A = betaine aldehyde + AH2. The catalysed reaction is betaine aldehyde + NAD(+) + H2O = glycine betaine + NADH + 2 H(+). Its pathway is amine and polyamine biosynthesis; betaine biosynthesis via choline pathway; betaine aldehyde from choline (cytochrome c reductase route): step 1/1. Involved in the biosynthesis of the osmoprotectant glycine betaine. Catalyzes the oxidation of choline to betaine aldehyde and betaine aldehyde to glycine betaine at the same rate. This chain is Oxygen-dependent choline dehydrogenase, found in Burkholderia cenocepacia (strain HI2424).